The sequence spans 1288 residues: Contactin-associated protein-like 3 (1288 aa).

Residues 1–25 form the signal peptide; the sequence is MASVAWAVLKVLLLLPTQTWSPVGA. Topologically, residues 26–1245 are extracellular; that stretch reads GNPPDCDAPL…LVNADRRDSA (1220 aa). Residues 31–177 form the F5/8 type C domain; the sequence is CDAPLASALP…IGMRIEVYGC (147 aa). Cys-31 and Cys-177 are oxidised to a cystine. Laminin G-like domains are found at residues 183–364 and 370–545; these read VVYF…SFSC and VPVT…IDSC. 4 N-linked (GlcNAc...) asparagine glycosylation sites follow: Asn-285, Asn-359, Asn-441, and Asn-497. A disulfide bridge connects residues Cys-332 and Cys-364. 4 disulfides stabilise this stretch: Cys-513–Cys-545, Cys-551–Cys-562, Cys-556–Cys-571, and Cys-573–Cys-583. The 33-residue stretch at 551–583 folds into the EGF-like 1 domain; the sequence is CLPSYCEHGGECSQSWDTFSCDCLGTGYTGETC. The region spanning 584–792 is the Fibrinogen C-terminal domain; the sequence is HSSLYEQSCE…LLCRGDQSFW (209 aa). 2 N-linked (GlcNAc...) asparagine glycosylation sites follow: Asn-623 and Asn-706. Positions 793–958 constitute a Laminin G-like 3 domain; that stretch reads NSASFNTETS…TVTPGVEPGC (166 aa). Cystine bridges form between Cys-931-Cys-958, Cys-962-Cys-975, Cys-969-Cys-984, and Cys-986-Cys-996. An EGF-like 2 domain is found at 962 to 996; sequence CSTYGHLCRNGGRCREKRRGVTCDCAFSAYDGPFC. The region spanning 1015–1203 is the Laminin G-like 4 domain; the sequence is QEHYTLSENS…RGHVAPMARC (189 aa). Residues Asn-1023, Asn-1073, and Asn-1120 are each glycosylated (N-linked (GlcNAc...) asparagine). Cys-1167 and Cys-1203 are oxidised to a cystine. The tract at residues 1215 to 1236 is disordered; that stretch reads ELAPRLAGGAGRSGPADEGEPL. A helical transmembrane segment spans residues 1246–1266; that stretch reads VIGGVIAVVIFILLCITAIAI. Over 1267–1288 the chain is Cytoplasmic; the sequence is RIYQQRKLRKENESKVSKKEEC.

Belongs to the neurexin family.

It is found in the cell membrane. The protein resides in the secreted. The sequence is that of Contactin-associated protein-like 3 (CNTNAP3) from Homo sapiens (Human).